The chain runs to 193 residues: Sporulation-specific transcriptional regulator GerR (193 aa).

In terms of domain architecture, HTH myb-type spans 1 to 61 (MTITRQDAWT…RWNSYVRKQY (61 aa)). The H-T-H motif DNA-binding region spans 35–57 (FEEVGRALTRTAAACGFRWNSYV). Residues 122 to 177 (AQEFQLEREKLKEQIQSLQKELEDLRSENQTLRNQLEMTEEDYKALIDIMDRARKM) adopt a coiled-coil conformation.

This sequence belongs to the RsfA transcriptional regulator family.

Functionally, transcriptional factor that regulates the expression of several late sporulation genes. Controls genes of both sigma-E and sigma-K regulons, acting alone on some genes and in conjunction with SpoIIID or GerE on others. Regulates, directly or indirectly, the expression of genes encoding coat proteins such as cgeA, cotB, cotC, cotG, cotU and cotY. Controls late sporulation genes in two ways: directly, by binding to the promoter region of genes such as cotB, cotU and spoVIF, and acting directly on their transcription, and indirectly, through the activation of SpoVIF, which stabilizes the transcriptional activator GerE and consequently induces the expression of the GerE-dependent genes, such as cotC and cotG. Its effect is strongly positive on spoVIF, cotC, and cotG, weakly positive on cotB, and negative on cotU. The sequence is that of Sporulation-specific transcriptional regulator GerR from Bacillus subtilis (strain 168).